The following is a 220-amino-acid chain: MKKEKAVVVFSGGQDSTTCLFWAIQQFEEVEAVTFNYNQRHKLEIDCAVEIAKELGIKHTILDMSLLNQLAPNALTRTDMEITHEEGELPSTFVDGRNLLFLSFAAVLAKQVGARHIVTGVCETDFSGYPDCRDVFVKSLNVTLNLSMDYPFVIHTPLMWIDKAETWKLSDELGAFEFVREKTLTCYNGIIGDGCGECPACQLRKAGLDTYLQEREGASN.

10–20 (FSGGQDSTTCL) provides a ligand contact to ATP. Zn(2+)-binding residues include Cys186, Cys195, Cys198, and Cys201.

This sequence belongs to the QueC family. As to quaternary structure, homodimer. It depends on Zn(2+) as a cofactor.

It catalyses the reaction 7-carboxy-7-deazaguanine + NH4(+) + ATP = 7-cyano-7-deazaguanine + ADP + phosphate + H2O + H(+). The protein operates within purine metabolism; 7-cyano-7-deazaguanine biosynthesis. In terms of biological role, catalyzes the ATP-dependent conversion of 7-carboxy-7-deazaguanine (CDG) to 7-cyano-7-deazaguanine (preQ(0)). This Bacillus mycoides (strain KBAB4) (Bacillus weihenstephanensis) protein is 7-cyano-7-deazaguanine synthase.